We begin with the raw amino-acid sequence, 336 residues long: 4-aminobenzoate N-oxygenase (336 aa).

Tyr-93 provides a ligand contact to 4-nitrobenzoate. Fe cation-binding residues include Glu-101, Glu-136, His-139, and Glu-196. Asn-200 lines the 4-nitrobenzoate pocket. 3 residues coordinate Fe cation: His-223, Glu-227, and His-230.

Belongs to the AurF N-oxygenase family. In terms of assembly, homodimer. Fe(2+) serves as cofactor.

It carries out the reaction 4-aminobenzoate + AH2 + 2 O2 = 4-nitrobenzoate + A + 2 H2O. It participates in antibiotic biosynthesis. In terms of biological role, involved in the biosynthesis of the polyketide antibiotic aureothin. Catalyzes the oxidation of p-aminobenzoate (pABA) to p-nitrobenzoate (pNBA), an unusual polyketide synthase starter unit. Reaction mechanism involves the generation of a peroxodiiron(III/III) intermediate, which effects the initial oxidation of p-aminobenzoate to p-hydroxylaminobenzoate (Ar-NHOH). Ar-NHOH is then probably directly converted to the fully oxidized p-nitrobenzoate via a four-electron N-oxidation, bypassing the formation of a nitroso compound. The protein is 4-aminobenzoate N-oxygenase of Streptomyces thioluteus.